Here is a 306-residue protein sequence, read N- to C-terminus: Ribonuclease Z (306 aa).

Zn(2+) is bound by residues His-63, His-65, Asp-67, His-68, His-140, Asp-211, and His-269. The active-site Proton acceptor is the Asp-67.

This sequence belongs to the RNase Z family. In terms of assembly, homodimer. It depends on Zn(2+) as a cofactor.

The enzyme catalyses Endonucleolytic cleavage of RNA, removing extra 3' nucleotides from tRNA precursor, generating 3' termini of tRNAs. A 3'-hydroxy group is left at the tRNA terminus and a 5'-phosphoryl group is left at the trailer molecule.. Its function is as follows. Zinc phosphodiesterase, which displays some tRNA 3'-processing endonuclease activity. Probably involved in tRNA maturation, by removing a 3'-trailer from precursor tRNA. The chain is Ribonuclease Z from Listeria innocua serovar 6a (strain ATCC BAA-680 / CLIP 11262).